The sequence spans 436 residues: Tubulin epsilon and delta complex protein 2 (436 aa).

2 disordered regions span residues 53–76 (ARTPSPVPETKEEDPSPACAPSSQ) and 94–191 (VRKG…PSSA). Over residues 111-131 (TSKAATSGAAAASHPRAPSRG) the composition is skewed to low complexity. A compositionally biased stretch (basic and acidic residues) spans 153 to 170 (DYPEHRLRSKGDKTHVRT). A Phosphoserine modification is found at S161.

In terms of assembly, interacts with TEDC1. Found in a complex with TEDC1, TEDC2, TUBE1 and TUBD1.

The protein localises to the cell projection. Its subcellular location is the cilium. It localises to the cytoplasm. The protein resides in the cytoskeleton. It is found in the microtubule organizing center. The protein localises to the centrosome. Its subcellular location is the centriole. Its function is as follows. Acts as a positive regulator of ciliary hedgehog signaling. Required for centriole stability. The chain is Tubulin epsilon and delta complex protein 2 from Mus musculus (Mouse).